A 171-amino-acid chain; its full sequence is S-ribosylhomocysteine lyase (171 aa).

Residues histidine 54, histidine 58, and cysteine 128 each contribute to the Fe cation site.

This sequence belongs to the LuxS family. As to quaternary structure, homodimer. Fe cation is required as a cofactor.

It catalyses the reaction S-(5-deoxy-D-ribos-5-yl)-L-homocysteine = (S)-4,5-dihydroxypentane-2,3-dione + L-homocysteine. In terms of biological role, involved in the synthesis of autoinducer 2 (AI-2) which is secreted by bacteria and is used to communicate both the cell density and the metabolic potential of the environment. The regulation of gene expression in response to changes in cell density is called quorum sensing. Catalyzes the transformation of S-ribosylhomocysteine (RHC) to homocysteine (HC) and 4,5-dihydroxy-2,3-pentadione (DPD). The polypeptide is S-ribosylhomocysteine lyase (Proteus mirabilis (strain HI4320)).